Here is a 621-residue protein sequence, read N- to C-terminus: F-box/LRR-repeat protein 4 (621 aa).

Arg28 is modified (asymmetric dimethylarginine). The region spanning 277 to 332 is the F-box domain; that stretch reads NGYFDKLPYELIQLILNHLTLPDLCRLAQTCKLLSQHCCDPLQYIHLNLQPYWAKL. LRR repeat units follow at residues 376–397, 402–421, 427–448, 452–474, 480–501, 504–524, 532–558, 559–583, and 584–609; these read ELVR…EVIS, NLQA…AFNH, SLKR…SILN, ELQH…ASMI, KLRT…AELA, CPLL…STGC, LPNL…ACNC, TRLQ…LLES, and CKDL…LNAS.

Part of a SCF (SKP1-CUL1-F-box) protein ligase complex. Interacts with VCP. Interacts with PPTC7; this interaction promotes destruction of BNIP3 and NIX and mitophagy suppression. In terms of tissue distribution, expressed in heart, kidney, liver, lung, pancreas, and placenta, but not in skeletal muscle.

It localises to the cytoplasm. The protein resides in the nucleus. It is found in the mitochondrion outer membrane. Functionally, substrate-recognition component of the mitochondria-localized SCF-FBXL4 ubiquitin E3 ligase complex that plays a role in the restriction of mitophagy by controlling the degradation of BNIP3 and NIX mitophagy receptors. Rescues also mitochondrial injury through reverting hyperactivation of DRP1-mediated mitochondrial fission. The protein is F-box/LRR-repeat protein 4 (FBXL4) of Homo sapiens (Human).